The sequence spans 300 residues: Ribosomal protein L11 methyltransferase (300 aa).

Residues threonine 152, glycine 173, aspartate 195, and asparagine 234 each contribute to the S-adenosyl-L-methionine site.

Belongs to the methyltransferase superfamily. PrmA family.

Its subcellular location is the cytoplasm. The enzyme catalyses L-lysyl-[protein] + 3 S-adenosyl-L-methionine = N(6),N(6),N(6)-trimethyl-L-lysyl-[protein] + 3 S-adenosyl-L-homocysteine + 3 H(+). Functionally, methylates ribosomal protein L11. This is Ribosomal protein L11 methyltransferase from Burkholderia orbicola (strain MC0-3).